The chain runs to 260 residues: Hydroxyethylthiazole kinase 1 (260 aa).

Substrate is bound at residue Met39. ATP contacts are provided by Arg115 and Thr160. Gly187 serves as a coordination point for substrate.

It belongs to the Thz kinase family. Mg(2+) serves as cofactor.

The enzyme catalyses 5-(2-hydroxyethyl)-4-methylthiazole + ATP = 4-methyl-5-(2-phosphooxyethyl)-thiazole + ADP + H(+). It functions in the pathway cofactor biosynthesis; thiamine diphosphate biosynthesis; 4-methyl-5-(2-phosphoethyl)-thiazole from 5-(2-hydroxyethyl)-4-methylthiazole: step 1/1. Catalyzes the phosphorylation of the hydroxyl group of 4-methyl-5-beta-hydroxyethylthiazole (THZ). This is Hydroxyethylthiazole kinase 1 from Streptococcus pneumoniae (strain ATCC 700669 / Spain 23F-1).